The chain runs to 362 residues: 3-isopropylmalate dehydrogenase (362 aa).

NAD(+) is bound at residue 78–91; that stretch reads GYKWDSLPPHQRPE. Residues R98, R108, R136, and D226 each contribute to the substrate site. Mg(2+) is bound by residues D226, D250, and D254. 284–296 provides a ligand contact to NAD(+); that stretch reads GSAPDIAGQDKAN.

This sequence belongs to the isocitrate and isopropylmalate dehydrogenases family. LeuB type 1 subfamily. In terms of assembly, homodimer. Mg(2+) serves as cofactor. Mn(2+) is required as a cofactor.

Its subcellular location is the cytoplasm. It carries out the reaction (2R,3S)-3-isopropylmalate + NAD(+) = 4-methyl-2-oxopentanoate + CO2 + NADH. Its pathway is amino-acid biosynthesis; L-leucine biosynthesis; L-leucine from 3-methyl-2-oxobutanoate: step 3/4. Functionally, catalyzes the oxidation of 3-carboxy-2-hydroxy-4-methylpentanoate (3-isopropylmalate) to 3-carboxy-4-methyl-2-oxopentanoate. The product decarboxylates to 4-methyl-2 oxopentanoate. In Nostoc sp. (strain PCC 7120 / SAG 25.82 / UTEX 2576), this protein is 3-isopropylmalate dehydrogenase.